Consider the following 434-residue polypeptide: F-box/FBD/LRR-repeat protein At3g26920 (434 aa).

Residues 16 to 65 form the F-box domain; sequence EDRISQLPEALLLQILSLLPTKEVVAVSVLAKRWRFLWKMVPSLEFFYYF. 7 LRR repeats span residues 69–95, 100–125, 145–172, 173–198, 219–244, 265–290, and 315–341; these read LERF…HLNM, DPRI…VLKV, TLEL…NLHE, VEFV…VIHQ, VIVE…KIEG, IIDV…SLKV, and TYKP…KIFD. Positions 353-403 constitute an FBD domain; that stretch reads KWNEPKNVPECLLLHLETFVWTCYEGKLENEIELAKYILRNARRLKKATFS.

The sequence is that of F-box/FBD/LRR-repeat protein At3g26920 from Arabidopsis thaliana (Mouse-ear cress).